The primary structure comprises 389 residues: MALTPESPSSFPGLAAIGSSVPEPPGSPNATLNSSWASPTEPSSLEDLVATGAIGTLLSAMGVVGVVGNAYTLVVTCRSLRAVASMYIYVVNLALADLLYLLSIPFIVATYITKEWHFGDVGCRVLFSLDFLTMHASIFTLTVMSSERYAAVLRPLDTVQRPKGYRKLLALGTWLLALLLTLPVMLAMRLVRRGPKSLCLPAWGPRAHRAYLTLLFATSIAGPGLLIGLLYARLARAYRRSQRASFKRARRPGARALRLVLGIVLLFWACFLPFWLWQLLAQYREAPLAPRTARIVNYLTTCLTYGNSCANPFLYTLLTRNYRDHLRGRVRSPGSGGVRGPVPSLQPRARFQRGSGRSLSSCSPQPTESLVLAAAAPAGPALESPGDPA.

Polar residues-rich tracts occupy residues 1-10 and 28-39; these read MALTPESPSS and PNATLNSSWASP. Residues 1-39 are disordered; it reads MALTPESPSSFPGLAAIGSSVPEPPGSPNATLNSSWASP. Residues 1–54 are Extracellular-facing; the sequence is MALTPESPSSFPGLAAIGSSVPEPPGSPNATLNSSWASPTEPSSLEDLVATGAI. Asparagine 29 and asparagine 33 each carry an N-linked (GlcNAc...) asparagine glycan. Residues 55–77 traverse the membrane as a helical segment; it reads GTLLSAMGVVGVVGNAYTLVVTC. Topologically, residues 78 to 87 are cytoplasmic; sequence RSLRAVASMY. The helical transmembrane segment at 88–113 threads the bilayer; that stretch reads IYVVNLALADLLYLLSIPFIVATYIT. Topologically, residues 114–124 are extracellular; the sequence is KEWHFGDVGCR. The cysteines at positions 123 and 199 are disulfide-linked. The chain crosses the membrane as a helical span at residues 125 to 146; the sequence is VLFSLDFLTMHASIFTLTVMSS. Residues 147–167 lie on the Cytoplasmic side of the membrane; it reads ERYAAVLRPLDTVQRPKGYRK. A helical transmembrane segment spans residues 168–186; the sequence is LLALGTWLLALLLTLPVML. Topologically, residues 187–209 are extracellular; the sequence is AMRLVRRGPKSLCLPAWGPRAHR. The chain crosses the membrane as a helical span at residues 210–232; sequence AYLTLLFATSIAGPGLLIGLLYA. Residues 233-258 lie on the Cytoplasmic side of the membrane; it reads RLARAYRRSQRASFKRARRPGARALR. The chain crosses the membrane as a helical span at residues 259-284; sequence LVLGIVLLFWACFLPFWLWQLLAQYR. Residues 285–297 are Extracellular-facing; the sequence is EAPLAPRTARIVN. The helical transmembrane segment at 298–318 threads the bilayer; it reads YLTTCLTYGNSCANPFLYTLL. The Cytoplasmic portion of the chain corresponds to 319–389; that stretch reads TRNYRDHLRG…PALESPGDPA (71 aa). The tract at residues 328 to 366 is disordered; the sequence is GRVRSPGSGGVRGPVPSLQPRARFQRGSGRSLSSCSPQP. A compositionally biased stretch (polar residues) spans 355–366; the sequence is SGRSLSSCSPQP.

Belongs to the G-protein coupled receptor 1 family.

The protein localises to the cell membrane. In terms of biological role, high affinity receptor for urotensin-2 and urotensin-2B. The activity of this receptor is mediated by a G-protein that activate a phosphatidylinositol-calcium second messenger system. In Macaca mulatta (Rhesus macaque), this protein is Urotensin-2 receptor (UTS2R).